The sequence spans 737 residues: Dual specificity protein kinase KNS1 (737 aa).

Disordered stretches follow at residues 1-33 and 270-290; these read MSQNIQIGTRKRSRANMNNSTTTGPANNTSSNK and SSLRKFTSNGSSESASSNKSN. Positions 15 to 33 are enriched in polar residues; that stretch reads ANMNNSTTTGPANNTSSNK. A compositionally biased stretch (low complexity) spans 277–290; the sequence is SNGSSESASSNKSN. Positions 313-720 constitute a Protein kinase domain; it reads FVVKDLLGQG…AKDALDHEWF (408 aa). Residues 319-327 and Lys343 contribute to the ATP site; that span reads LGQGTFGKV. The Proton acceptor role is filled by Asp440. The residue at position 562 (Thr562) is a Phosphothreonine.

It belongs to the protein kinase superfamily. CMGC Ser/Thr protein kinase family. Lammer subfamily. In terms of processing, phosphorylated (auto-) on Ser/Thr/Tyr.

It carries out the reaction L-seryl-[protein] + ATP = O-phospho-L-seryl-[protein] + ADP + H(+). The enzyme catalyses L-threonyl-[protein] + ATP = O-phospho-L-threonyl-[protein] + ADP + H(+). It catalyses the reaction L-tyrosyl-[protein] + ATP = O-phospho-L-tyrosyl-[protein] + ADP + H(+). Its function is as follows. Nonessential protein kinase. The polypeptide is Dual specificity protein kinase KNS1 (KNS1) (Saccharomyces cerevisiae (strain ATCC 204508 / S288c) (Baker's yeast)).